The chain runs to 168 residues: Mitochondrial inner membrane protein Mpv17 (168 aa).

The next 4 membrane-spanning stretches (helical) occupy residues 12 to 29 (INVAAVMCLGDTISQFFF), 41 to 61 (RTLRFGIVGLVFVGPTLRRWY), 82 to 101 (MLVDQTLFAPPFTMAMSFLV), and 144 to 166 (LGYQVLYAQFIALVWNCYLSMIL).

The protein belongs to the peroxisomal membrane protein PXMP2/4 family. In terms of assembly, part of a larger complex that may be a homohexamer.

Its subcellular location is the mitochondrion inner membrane. Non-selective channel that modulates the membrane potential under normal conditions and oxidative stress, and is involved in mitochondrial homeostasis. Can translocate uridine, but not orotate, across a lipid membrane. Involved in maintenance of mitochondrial ultrastructure. May be involved in mitochondrial DNA (mtDNA) maintenance but does not appear to be directly involved in mitochondrial deoxynucleoside triphosphate (dNTP) pool homeostasis. May be involved in the regulation of reactive oxygen species metabolism and the control of oxidative phosphorylation. This is Mitochondrial inner membrane protein Mpv17 from Drosophila melanogaster (Fruit fly).